We begin with the raw amino-acid sequence, 531 residues long: T-complex protein 1 subunit zeta-2 (531 aa).

This sequence belongs to the TCP-1 chaperonin family. Component of the chaperonin-containing T-complex (TRiC), a heterooligomeric complex of about 850 to 900 kDa that forms two stacked rings, 12 to 16 nm in diameter.

It localises to the cytoplasm. Functionally, component of the chaperonin-containing T-complex (TRiC), a molecular chaperone complex that assists the folding of proteins upon ATP hydrolysis. This Bos taurus (Bovine) protein is T-complex protein 1 subunit zeta-2 (CCT6B).